The primary structure comprises 305 residues: Ribonuclease BN (305 aa).

Positions 64, 66, 68, 69, 141, 212, and 270 each coordinate Zn(2+). The Proton acceptor role is filled by aspartate 68.

This sequence belongs to the RNase Z family. RNase BN subfamily. In terms of assembly, homodimer. Zn(2+) is required as a cofactor.

Functionally, zinc phosphodiesterase, which has both exoribonuclease and endoribonuclease activities. This chain is Ribonuclease BN, found in Escherichia coli O6:K15:H31 (strain 536 / UPEC).